Here is a 311-residue protein sequence, read N- to C-terminus: Ferritin-like catalase Nec2 (311 aa).

The signal sequence occupies residues 1-25; it reads MAFLSNMAMFITMLMFSSMMHPCFS. N128, N257, and N289 each carry an N-linked (GlcNAc...) asparagine glycan.

Forms homomultimers. As to expression, observed in all flowers organs; mainly expressed in nectaries and, to a lower extent, in petals and ovules, as well as in stigmas and calyx at low levels.

It carries out the reaction 2 H2O2 = O2 + 2 H2O. In terms of biological role, involved in the production of blood-red nectar containing the alkaloid nesocodin and that serves as a visual attractant for pollinator visitation, including vertebrates such as Phelsuma geckos. The nectar is initially acidic and pale yellow, but slowly becomes alkaline before turning into red within 24 hours. Together with NEC1 and NEC3, facilitates the condensation of sinapaldehyde ((E)-3,5-dimethoxy-4-hydroxycinnamaldehyde) and proline to form nesocodin, a pigment with a stable imine bond. Protects nesocodin from degradation by hydrogen peroxide H(2)O(2) by catalyzing the degradation of H(2)O(2) into water H(2)O and dioxygene O(2). This is Ferritin-like catalase Nec2 from Nesocodon mauritianus (Blue Mauritius bellflower).